A 425-amino-acid chain; its full sequence is Gamma-glutamyl phosphate reductase (425 aa).

Belongs to the gamma-glutamyl phosphate reductase family.

Its subcellular location is the cytoplasm. The catalysed reaction is L-glutamate 5-semialdehyde + phosphate + NADP(+) = L-glutamyl 5-phosphate + NADPH + H(+). The protein operates within amino-acid biosynthesis; L-proline biosynthesis; L-glutamate 5-semialdehyde from L-glutamate: step 2/2. Catalyzes the NADPH-dependent reduction of L-glutamate 5-phosphate into L-glutamate 5-semialdehyde and phosphate. The product spontaneously undergoes cyclization to form 1-pyrroline-5-carboxylate. The sequence is that of Gamma-glutamyl phosphate reductase from Symbiobacterium thermophilum (strain DSM 24528 / JCM 14929 / IAM 14863 / T).